The primary structure comprises 625 residues: Endoglucanase D (625 aa).

The first 17 residues, 1-17, serve as a signal peptide directing secretion; it reads SLTGVFPSGLIETKVSA. The Nucleophile role is filled by aspartate 177. Active-site residues include histidine 492 and aspartate 522. Residue glutamate 531 is the Proton donor of the active site. Residues 555 to 625 enclose the Dockerin domain; that stretch reads NEVLYGDVND…LIRVIEKLPI (71 aa).

This sequence belongs to the glycosyl hydrolase 9 (cellulase E) family. Ca(2+) serves as cofactor.

The enzyme catalyses Endohydrolysis of (1-&gt;4)-beta-D-glucosidic linkages in cellulose, lichenin and cereal beta-D-glucans.. Functionally, this enzyme catalyzes the endohydrolysis of 1,4-beta-glucosidic linkages in cellulose, lichenin and cereal beta-D-glucans. This chain is Endoglucanase D (celD), found in Acetivibrio thermocellus (Hungateiclostridium thermocellum).